A 346-amino-acid chain; its full sequence is MRFVDRCRLKVIAGDGGNGAIAFRREKYIPFGGPAGGDGGRGGDVVFVGDGGLSTLLDFTYARTLEADRGEHGMGSDCHGRAGADRVEKLPVGTQIFDAESGELLADVTEHGQRVIVARGGKGGRGNLHFKSPHDRAPRRAEPGEPGEARELRLELKVLADVGLLGFPNAGKSTFVAAVSAARPKIGDYPFTTLTPILGMVEIGGGVRAGGSSFVIADIPGLVPGASEGVGLGIQFLRHVERTRALLHLVTLDPGEGREPLADYRALRKELKKFSPEIAERPEIVVLTKADLTEVRDAYPKLKARFAKAKVKLHLISAATGEGVPELVRELAALARKREEPAEQDG.

An Obg domain is found at 1–159; sequence MRFVDRCRLK…RELRLELKVL (159 aa). Residues 122-147 form a disordered region; the sequence is KGGRGNLHFKSPHDRAPRRAEPGEPG. Residues 132-147 are compositionally biased toward basic and acidic residues; that stretch reads SPHDRAPRRAEPGEPG. The OBG-type G domain maps to 160–336; the sequence is ADVGLLGFPN…LVRELAALAR (177 aa). GTP-binding positions include 166 to 173, 191 to 195, 218 to 221, 288 to 291, and 317 to 319; these read GFPNAGKS, FTTLT, DIPG, TKAD, and SAA. Serine 173 and threonine 193 together coordinate Mg(2+).

The protein belongs to the TRAFAC class OBG-HflX-like GTPase superfamily. OBG GTPase family. In terms of assembly, monomer. Requires Mg(2+) as cofactor.

It localises to the cytoplasm. An essential GTPase which binds GTP, GDP and possibly (p)ppGpp with moderate affinity, with high nucleotide exchange rates and a fairly low GTP hydrolysis rate. Plays a role in control of the cell cycle, stress response, ribosome biogenesis and in those bacteria that undergo differentiation, in morphogenesis control. The sequence is that of GTPase Obg from Sorangium cellulosum (strain So ce56) (Polyangium cellulosum (strain So ce56)).